The sequence spans 878 residues: Multiple C2 and transmembrane domain-containing protein 2 (878 aa).

2 disordered regions span residues 20–40 (LINLSKKKAKKSPSKPLDLRV) and 143–178 (KPSLGRDAPEEHDKTHGNDDLNASMTSQHFEEESTL). The span at 149 to 161 (DAPEEHDKTHGND) shows a compositional bias: basic and acidic residues. C2 domains follow at residues 177 to 292 (TLGE…EHIL), 334 to 452 (SKSS…CLEL), and 486 to 607 (PSER…CYVL). Ca(2+) is bound by residues D210, D216, D263, D265, and D270. Ca(2+)-binding residues include D525, D531, D577, D579, and D585. Residues 694-714 (FVVFLVTVWNFELYMIPLALL) form a helical membrane-spanning segment. Residues 728 to 752 (KASSTQDSQESTDVEEEGKEEEKES) are disordered. Over residues 737–746 (ESTDVEEEGK) the composition is skewed to acidic residues. A helical transmembrane segment spans residues 794–814 (PFLSLLACLILAITTVILYFI).

It belongs to the MCTP family. It depends on Ca(2+) as a cofactor.

The protein localises to the membrane. Might play a role in the development of cardiac outflow tract. The polypeptide is Multiple C2 and transmembrane domain-containing protein 2 (Mctp2) (Mus musculus (Mouse)).